A 547-amino-acid chain; its full sequence is MEATRNLVSSSPSFQTKTHLKSSYSSPSSVVMLHDQTTTPVVNSRHLNSLSRHFPASVLSQEPREESRPLSHALRDDRTSQLTLERRQFDELVSSREDEKFEQQLLHSTGLWNLLISPLTSETKLPAVVSPLADAELCDVVALAQKALSASKQAALLVDDTEANPSDNIKDSLSTSSSMSLPEKGNIVRSKRQLERRAKNRRAPKSNDVDDEGYVPQKTSAKKKYKQGADNDDALQLFLWGPETKQLLTAKEEAELISHIQHLLKLEKVKTKLESQNGCEPTIGEWAEAMGISSPVLKSDIHRGRSSREKLITANLRLVVHIAKQYQNRGLNFQDLLQEGSMGLMKSVEKFKPQSGCRFATYAYWWIRQSIRKSIFQNSRTIRLPENVYMLLGKVSEARKTCVQEGNYRPSKEELAGHVGVSTEKLDKLLYNTRTPLSMQQPIWSDQDTTFQEITPDSGIETPTMSVGKQLMRNHVRNLLNVLSPKERRIIKLRFGIDGGKQRSLSEIGEIYGLSKERVRQLESRALYRLKQNMNSHGLHAYADLLV.

Positions 1-17 are enriched in polar residues; sequence MEATRNLVSSSPSFQTK. Disordered stretches follow at residues 1-28 and 54-79; these read MEAT…SSPS and FPAS…DDRT. Residues 1–55 constitute a chloroplast transit peptide; sequence MEATRNLVSSSPSFQTKTHLKSSYSSPSSVVMLHDQTTTPVVNSRHLNSLSRHFP. Positions 62–79 are enriched in basic and acidic residues; it reads EPREESRPLSHALRDDRT. Residues Ser-94, Ser-95, Ser-174, Ser-176, Ser-177, and Ser-180 each carry the phosphoserine; by CK2 modification. Positions 163 to 226 are disordered; sequence ANPSDNIKDS…QKTSAKKKYK (64 aa). Over residues 172–181 the composition is skewed to low complexity; that stretch reads SLSTSSSMSL. A Phosphothreonine; by CK2 modification is found at Thr-249. A Polymerase core binding motif is present at residues 335-348; it reads DLLQEGSMGLMKSV. Positions 505–524 form a DNA-binding region, H-T-H motif; sequence LSEIGEIYGLSKERVRQLES.

This sequence belongs to the sigma-70 factor family. As to quaternary structure, interacts (via N-terminus) with DG1 (via C-terminus). Phosphorylated to acquire sigma activity; site-specific phosphorylation regulates promoter affinity. Phosphorylation at Ser-174 by chloroplastic CK2 requires prior phosphorylation at Ser-177. Phosphorylation at either Ser-94, Ser-95 or Ser-174 is required for sigma activation. Expressed in seedling, accumulating progressively. Present in leaves but not in roots.

It localises to the plastid. The protein localises to the chloroplast. In terms of biological role, sigma factors are initiation factors that promote the attachment of plastid-encoded RNA polymerase (PEP) to specific initiation sites and are then released. Regulates transcription in chloroplast in a DG1-dependent manner. Involved in light-dependent chloroplast development. Required during early plant development and primary leaf formation. This chain is RNA polymerase sigma factor sigF, chloroplastic (SIGF), found in Arabidopsis thaliana (Mouse-ear cress).